Reading from the N-terminus, the 233-residue chain is Triosephosphate isomerase (233 aa).

8-10 (NWK) is a substrate binding site. Histidine 91 serves as the catalytic Electrophile. Glutamate 155 functions as the Proton acceptor in the catalytic mechanism. Positions 161 and 192 each coordinate substrate.

The protein belongs to the triosephosphate isomerase family. In terms of assembly, homodimer.

Its subcellular location is the cytoplasm. It carries out the reaction D-glyceraldehyde 3-phosphate = dihydroxyacetone phosphate. It participates in carbohydrate biosynthesis; gluconeogenesis. It functions in the pathway carbohydrate degradation; glycolysis; D-glyceraldehyde 3-phosphate from glycerone phosphate: step 1/1. Involved in the gluconeogenesis. Catalyzes stereospecifically the conversion of dihydroxyacetone phosphate (DHAP) to D-glyceraldehyde-3-phosphate (G3P). The protein is Triosephosphate isomerase of Wolbachia sp. subsp. Brugia malayi (strain TRS).